A 346-amino-acid chain; its full sequence is Tripartite motif-containing protein 44 (346 aa).

The interval 68 to 167 (TPPASGGDDA…ETEAESEFDP (100 aa)) is disordered. Residues 89–167 (EGEVESEVGE…ETEAESEFDP (79 aa)) show a composition bias toward acidic residues. Residues 176-217 (VAKRKCPDHGLDLSTYCQEDRQLICVLCPVIGAHRGHQLSTL) form a B box-type zinc finger. Zn(2+)-binding residues include cysteine 181, histidine 184, cysteine 203, and histidine 209. The stretch at 292-327 (AHVTEILADIQSHMDRLMTQMAQAKEQLDTSNESAE) forms a coiled coil. The interval 313–346 (AQAKEQLDTSNESAEPKAEGDEEGPSGASEEEDT) is disordered. Positions 332-346 (GDEEGPSGASEEEDT) are enriched in acidic residues. Serine 338 and serine 341 each carry phosphoserine.

In terms of assembly, interacts (via coiled coil) with TRIM17 (via coiled coil). Expressed mainly in brain with high level in cerebral hemispheres and cerebellum. Lower expression in kidney, lung and spleen. In brain is detected in the hippocampus, thalamic and pretectal nuclei, substantia nigra, the dorsal part of the medulla, the cerebellum, in the olfactory nucleus, other cortical areas apart from hippocampus and the striatum. Indeed expression is confined in neuronal somata namely in the CA3 region and dentate gyrus of the hippocampus, caudate-putamen, parabranchial nucleus, olfactory nucleus, cortex, deep cerebellar nuclei and thalamus. Also highly expressed in the spleen. thymus and testis.

In terms of biological role, may play a role in the process of differentiation and maturation of neuronal cells. May regulate the activity of TRIM17. Is a negative regulator of PAX6 expression. The chain is Tripartite motif-containing protein 44 (Trim44) from Mus musculus (Mouse).